Here is a 190-residue protein sequence, read N- to C-terminus: Ion-translocating oxidoreductase complex subunit B (190 aa).

Positions 1–26 are hydrophobic; the sequence is MLTFWLAVATLSALALVAGAVLGFAA. A 4Fe-4S domain is found at 32 to 90; it reads KTDPVAERIDALLPQSQCAQCGYPGCRPYAEAVAGGAPINKCVPGGEAVMLKIAAQLSV. Positions 49, 52, 57, 73, 115, 118, 121, 125, 145, 148, 151, and 155 each coordinate [4Fe-4S] cluster. 2 4Fe-4S ferredoxin-type domains span residues 106–135 and 136–165; these read RVAW…GATR and AVHT…MRPL.

The protein belongs to the 4Fe4S bacterial-type ferredoxin family. RnfB subfamily. In terms of assembly, the complex is composed of six subunits: RnfA, RnfB, RnfC, RnfD, RnfE and RnfG. [4Fe-4S] cluster is required as a cofactor.

It is found in the cell inner membrane. Functionally, part of a membrane-bound complex that couples electron transfer with translocation of ions across the membrane. This is Ion-translocating oxidoreductase complex subunit B from Sodalis glossinidius (strain morsitans).